A 205-amino-acid polypeptide reads, in one-letter code: Melanocortin-2 receptor accessory protein 2 (205 aa).

An N-linked (GlcNAc...) asparagine glycan is attached at N9. A helical transmembrane segment spans residues 45 to 65 (IVIGFWVGLAVFVIFMFFVLT). The residue at position 89 (S89) is a Phosphoserine.

This sequence belongs to the MRAP family. As to quaternary structure, homodimer and heterodimer. Forms antiparallel homodimers and heterodimers with MRAP. Interacts with MC1R, MC2R, MC3R, MC4R and MC5R. As to expression, expressed in the adrenal gland and brain. Not expressed in other tissues.

Its subcellular location is the cell membrane. The protein localises to the endoplasmic reticulum membrane. Its function is as follows. Modulator of melanocortin receptor 4 (MC4R), a receptor involved in energy homeostasis. Plays a central role in the control of energy homeostasis and body weight regulation by increasing ligand-sensitivity of MC4R and MC4R-mediated generation of cAMP. May also act as a negative regulator of MC2R: competes with MRAP for binding to MC2R and impairs the binding of corticotropin (ACTH) to MC2R. May also regulate activity of other melanocortin receptors (MC1R, MC3R and MC5R); however, additional evidence is required in vivo. In Homo sapiens (Human), this protein is Melanocortin-2 receptor accessory protein 2 (MRAP2).